We begin with the raw amino-acid sequence, 119 residues long: Basic phospholipase A2 DE-1 (119 aa).

Cystine bridges form between cysteine 11-cysteine 71, cysteine 26-cysteine 118, cysteine 28-cysteine 44, cysteine 43-cysteine 99, cysteine 50-cysteine 92, cysteine 60-cysteine 85, and cysteine 78-cysteine 90. Ca(2+)-binding residues include tyrosine 27, glycine 29, glycine 31, and aspartate 48. Aspartate 93 is a catalytic residue.

Belongs to the phospholipase A2 family. Group I subfamily. D49 sub-subfamily. The cofactor is Ca(2+). As to expression, expressed by the venom gland.

It localises to the secreted. The catalysed reaction is a 1,2-diacyl-sn-glycero-3-phosphocholine + H2O = a 1-acyl-sn-glycero-3-phosphocholine + a fatty acid + H(+). PLA2 catalyzes the calcium-dependent hydrolysis of the 2-acyl groups in 3-sn-phosphoglycerides. This Hemachatus haemachatus (Rinkhals) protein is Basic phospholipase A2 DE-1.